The primary structure comprises 490 residues: GTPase Der (490 aa).

EngA-type G domains lie at 3-166 (PVIA…PKDE) and 196-369 (IKIA…KSAV). GTP is bound by residues 9-16 (GRPNVGKS), 56-60 (DTGGI), 118-121 (NKID), 202-209 (GRPNVGKS), 249-253 (DTAGV), and 314-317 (NKWD). The 85-residue stretch at 370–454 (TRWPTSRLTQ…PIRIEFKGGE (85 aa)) folds into the KH-like domain. Residues 452 to 490 (GGENPYEGNKNTLTDRQVNKKRRMMSHHKKADKKRRDKR) are disordered. A compositionally biased stretch (basic residues) spans 470 to 490 (NKKRRMMSHHKKADKKRRDKR).

This sequence belongs to the TRAFAC class TrmE-Era-EngA-EngB-Septin-like GTPase superfamily. EngA (Der) GTPase family. As to quaternary structure, associates with the 50S ribosomal subunit.

Functionally, GTPase that plays an essential role in the late steps of ribosome biogenesis. The chain is GTPase Der from Pseudomonas savastanoi pv. phaseolicola (strain 1448A / Race 6) (Pseudomonas syringae pv. phaseolicola (strain 1448A / Race 6)).